Here is a 127-residue protein sequence, read N- to C-terminus: Calcitonin receptor-stimulating peptide 2 (127 aa).

An N-terminal signal peptide occupies residues 1–25 (MGFWKLSPFLAIGLLVMYQAGILQA). The propeptide occupies 26–81 (APFRSALENPLESATLTEDEICVLLTAVVKDYVQMKARELQQEQETEGSSLTAQKS). Residues 65 to 85 (LQQEQETEGSSLTAQKSSCKD) form a disordered region. The span at 72-81 (EGSSLTAQKS) shows a compositional bias: polar residues. C83 and C88 form a disulfide bridge.

The protein belongs to the calcitonin family.

The protein resides in the secreted. This chain is Calcitonin receptor-stimulating peptide 2 (CRSP2), found in Canis lupus familiaris (Dog).